We begin with the raw amino-acid sequence, 453 residues long: Bifunctional protein GlmU (453 aa).

The interval 1–226 (MSLNVVILAA…AMEVEGANNR (226 aa)) is pyrophosphorylase. UDP-N-acetyl-alpha-D-glucosamine is bound by residues 8–11 (LAAG), K22, Q73, 78–79 (GT), 100–102 (YGD), G137, E151, N166, and N224. D102 provides a ligand contact to Mg(2+). N224 lines the Mg(2+) pocket. The segment at 227–247 (VQLAQLERSYQKMQAERLMIA) is linker. The N-acetyltransferase stretch occupies residues 248-453 (GATLIDPARF…QNWARPVKKK (206 aa)). UDP-N-acetyl-alpha-D-glucosamine-binding residues include R330 and K348. H360 functions as the Proton acceptor in the catalytic mechanism. 2 residues coordinate UDP-N-acetyl-alpha-D-glucosamine: Y363 and N374. Acetyl-CoA is bound by residues A377, 383 to 384 (NY), S402, A420, and R437.

This sequence in the N-terminal section; belongs to the N-acetylglucosamine-1-phosphate uridyltransferase family. It in the C-terminal section; belongs to the transferase hexapeptide repeat family. Homotrimer. The cofactor is Mg(2+).

Its subcellular location is the cytoplasm. It catalyses the reaction alpha-D-glucosamine 1-phosphate + acetyl-CoA = N-acetyl-alpha-D-glucosamine 1-phosphate + CoA + H(+). The catalysed reaction is N-acetyl-alpha-D-glucosamine 1-phosphate + UTP + H(+) = UDP-N-acetyl-alpha-D-glucosamine + diphosphate. The protein operates within nucleotide-sugar biosynthesis; UDP-N-acetyl-alpha-D-glucosamine biosynthesis; N-acetyl-alpha-D-glucosamine 1-phosphate from alpha-D-glucosamine 6-phosphate (route II): step 2/2. It functions in the pathway nucleotide-sugar biosynthesis; UDP-N-acetyl-alpha-D-glucosamine biosynthesis; UDP-N-acetyl-alpha-D-glucosamine from N-acetyl-alpha-D-glucosamine 1-phosphate: step 1/1. Its pathway is bacterial outer membrane biogenesis; LPS lipid A biosynthesis. Its function is as follows. Catalyzes the last two sequential reactions in the de novo biosynthetic pathway for UDP-N-acetylglucosamine (UDP-GlcNAc). The C-terminal domain catalyzes the transfer of acetyl group from acetyl coenzyme A to glucosamine-1-phosphate (GlcN-1-P) to produce N-acetylglucosamine-1-phosphate (GlcNAc-1-P), which is converted into UDP-GlcNAc by the transfer of uridine 5-monophosphate (from uridine 5-triphosphate), a reaction catalyzed by the N-terminal domain. This Aeromonas hydrophila subsp. hydrophila (strain ATCC 7966 / DSM 30187 / BCRC 13018 / CCUG 14551 / JCM 1027 / KCTC 2358 / NCIMB 9240 / NCTC 8049) protein is Bifunctional protein GlmU.